Consider the following 302-residue polypeptide: Sulfate adenylyltransferase subunit 2 (302 aa).

Belongs to the PAPS reductase family. CysD subfamily. As to quaternary structure, heterodimer composed of CysD, the smaller subunit, and CysN.

The catalysed reaction is sulfate + ATP + H(+) = adenosine 5'-phosphosulfate + diphosphate. It participates in sulfur metabolism; hydrogen sulfide biosynthesis; sulfite from sulfate: step 1/3. Functionally, with CysN forms the ATP sulfurylase (ATPS) that catalyzes the adenylation of sulfate producing adenosine 5'-phosphosulfate (APS) and diphosphate, the first enzymatic step in sulfur assimilation pathway. APS synthesis involves the formation of a high-energy phosphoric-sulfuric acid anhydride bond driven by GTP hydrolysis by CysN coupled to ATP hydrolysis by CysD. The sequence is that of Sulfate adenylyltransferase subunit 2 from Escherichia coli O81 (strain ED1a).